A 357-amino-acid chain; its full sequence is Tetraacyldisaccharide 4'-kinase (357 aa).

67 to 74 (SVGGTGKT) serves as a coordination point for ATP.

It belongs to the LpxK family.

It carries out the reaction a lipid A disaccharide + ATP = a lipid IVA + ADP + H(+). The protein operates within glycolipid biosynthesis; lipid IV(A) biosynthesis; lipid IV(A) from (3R)-3-hydroxytetradecanoyl-[acyl-carrier-protein] and UDP-N-acetyl-alpha-D-glucosamine: step 6/6. In terms of biological role, transfers the gamma-phosphate of ATP to the 4'-position of a tetraacyldisaccharide 1-phosphate intermediate (termed DS-1-P) to form tetraacyldisaccharide 1,4'-bis-phosphate (lipid IVA). This Syntrophotalea carbinolica (strain DSM 2380 / NBRC 103641 / GraBd1) (Pelobacter carbinolicus) protein is Tetraacyldisaccharide 4'-kinase.